The sequence spans 1057 residues: Probable E3 ubiquitin-protein ligase HERC4 (1057 aa).

RCC1 repeat units lie at residues 1-51 (MLCW…FVLD), 52-101 (DGTV…ALND), 102-154 (KGQV…ALSK), 156-207 (SEVF…VLTL), 208-259 (SGAI…ALTK), 261-311 (GGVF…AFVP), and 313-368 (SGRI…KRIF). In terms of domain architecture, HECT spans 730-1057 (KNIDYKKPLK…IDHNEGFSLI (328 aa)). Cys1025 functions as the Glycyl thioester intermediate in the catalytic mechanism.

Expressed in brain and testis and detected in heart and placenta.

Its subcellular location is the cytoplasm. The protein localises to the cytosol. The catalysed reaction is S-ubiquitinyl-[E2 ubiquitin-conjugating enzyme]-L-cysteine + [acceptor protein]-L-lysine = [E2 ubiquitin-conjugating enzyme]-L-cysteine + N(6)-ubiquitinyl-[acceptor protein]-L-lysine.. Its pathway is protein modification; protein ubiquitination. Functionally, probable E3 ubiquitin-protein ligase involved in either protein trafficking or in the distribution of cellular structures. Required for spermatozoon maturation and fertility, and for the removal of the cytoplasmic droplet of the spermatozoon. E3 ubiquitin-protein ligases accept ubiquitin from an E2 ubiquitin-conjugating enzyme in the form of a thioester and then directly transfer it to targeted substrates. This Homo sapiens (Human) protein is Probable E3 ubiquitin-protein ligase HERC4 (HERC4).